The chain runs to 299 residues: UPF0282 protein TK1681 (299 aa).

Belongs to the UPF0282 family.

This is UPF0282 protein TK1681 from Thermococcus kodakarensis (strain ATCC BAA-918 / JCM 12380 / KOD1) (Pyrococcus kodakaraensis (strain KOD1)).